The sequence spans 219 residues: Pyridoxal 5'-phosphate synthase subunit PDX2 (219 aa).

52-54 is a binding site for L-glutamine; sequence GES. C87 (nucleophile) is an active-site residue. L-glutamine-binding positions include R121 and 153-154; that span reads IR. Active-site charge relay system residues include H196 and E198.

Belongs to the glutaminase PdxT/SNO family. In terms of assembly, in the presence of Pdx1, forms a dodecamer of heterodimers. Only shows activity in the heterodimer.

It localises to the cytoplasm. The enzyme catalyses aldehydo-D-ribose 5-phosphate + D-glyceraldehyde 3-phosphate + L-glutamine = pyridoxal 5'-phosphate + L-glutamate + phosphate + 3 H2O + H(+). The catalysed reaction is L-glutamine + H2O = L-glutamate + NH4(+). The protein operates within cofactor biosynthesis; pyridoxal 5'-phosphate biosynthesis. Its function is as follows. Catalyzes the hydrolysis of glutamine to glutamate and ammonia as part of the biosynthesis of pyridoxal 5'-phosphate. The resulting ammonia molecule is channeled to the active site of Pdx1. This is Pyridoxal 5'-phosphate synthase subunit PDX2 from Plasmodium falciparum (isolate 3D7).